A 942-amino-acid polypeptide reads, in one-letter code: tRNAse Z TRZ4, mitochondrial (942 aa).

The N-terminal 50 residues, 1–50 (MLTSSMPQNLSLFGFSPLKSSSFALILRPFSLYPPIFASSSPAPSRRPPR), are a transit peptide targeting the mitochondrion. The tract at residues 38 to 85 (ASSSPAPSRRPPRTAGYRRSGPSPPRRKWSSFEEQKRKGRSPMEKDKA) is disordered. The span at 67–85 (SSFEEQKRKGRSPMEKDKA) shows a compositional bias: basic and acidic residues.

This sequence belongs to the RNase Z family. Homodimer. It depends on Zn(2+) as a cofactor. The cofactor is Ca(2+). Requires Mn(2+) as cofactor. Mg(2+) is required as a cofactor.

The protein resides in the mitochondrion. The enzyme catalyses Endonucleolytic cleavage of RNA, removing extra 3' nucleotides from tRNA precursor, generating 3' termini of tRNAs. A 3'-hydroxy group is left at the tRNA terminus and a 5'-phosphoryl group is left at the trailer molecule.. Zinc phosphodiesterase, which displays tRNA 3'-processing endonuclease activity. Involved in tRNA maturation, by removing a 3'-trailer from precursor tRNA. Can process the mitochondrial tRNA-like structures (t-elements). The protein is tRNAse Z TRZ4, mitochondrial of Arabidopsis thaliana (Mouse-ear cress).